We begin with the raw amino-acid sequence, 487 residues long: Probable cytosol aminopeptidase (487 aa).

Mn(2+) is bound by residues Lys253 and Asp258. Residue Lys265 is part of the active site. 3 residues coordinate Mn(2+): Asp277, Asp337, and Glu339. The active site involves Arg341.

Belongs to the peptidase M17 family. Requires Mn(2+) as cofactor.

The protein localises to the cytoplasm. It carries out the reaction Release of an N-terminal amino acid, Xaa-|-Yaa-, in which Xaa is preferably Leu, but may be other amino acids including Pro although not Arg or Lys, and Yaa may be Pro. Amino acid amides and methyl esters are also readily hydrolyzed, but rates on arylamides are exceedingly low.. The enzyme catalyses Release of an N-terminal amino acid, preferentially leucine, but not glutamic or aspartic acids.. Functionally, presumably involved in the processing and regular turnover of intracellular proteins. Catalyzes the removal of unsubstituted N-terminal amino acids from various peptides. In Parasynechococcus marenigrum (strain WH8102), this protein is Probable cytosol aminopeptidase.